A 150-amino-acid chain; its full sequence is MQDKIPTIAELRELSLRLLTKIPYLKMLVLFGSRATGNINANSDWDFAVLYDEEKYNLYIQNNPLAAFVIPGILGEIFKINSDKIDIVELNHCSKLIAHFVARDGKVLYEEPGDEFDKFQQRVLLSNTEIKKIEKTKLENIENFLQRWGV.

Positions 32-46 (GSRATGNINANSDWD) match the GSX(10)DXD motif motif. Catalysis depends on residues D44 and D46. Mg(2+) is bound by residues D44, D46, and D86.

It belongs to the MntA antitoxin family. In terms of assembly, forms a complex with HepT, probably MntA(1):HepT(2) in vivo; can only be purified when both 'Arg-102' and 'Tyr-109' (or 'His-107' and 'Tyr-109') of HepThave been mutated. The fully di-AMPylated HepT homodimer is not found in a complex with MntA. Mg(2+) is required as a cofactor.

It catalyses the reaction L-tyrosyl-[protein] + ATP = O-(5'-adenylyl)-L-tyrosyl-[protein] + diphosphate. It carries out the reaction O-(5'-adenylyl)-L-tyrosyl-[protein] + ATP = O-[5'-(adenylyl-(5'-&gt;3')-adenylyl)]-L-tyrosyl-[protein] + diphosphate. Antitoxin component of a type VII toxin-antitoxin (TA) system. Upon cloning in E.coli neutralizes the effect of cognate toxin HepT. Neutralization is mostly due to di-AMPylation of toxin by this enzyme. Successively di-AMPylates HepT on 'Tyr-109'. In vitro will use ATP, dATP, GTP, dGTP, TTP or UTP to generate a mono-modified protein, but requires a purine nucleotide for the second modification reaction (ATP, dATP or GTP). In Aphanizomenon flos-aquae (strain 2012/KM1/D3), this protein is Protein adenylyltransferase MntA.